We begin with the raw amino-acid sequence, 107 residues long: uncharacterized protein (107 aa).

This is an uncharacterized protein from Acidianus sp. F28 (AFV-2).